The primary structure comprises 131 residues: Large ribosomal subunit protein bL12 (131 aa).

A compositionally biased stretch (basic and acidic residues) spans 99–125; the sequence is ESTPKPIKEGTNKDDAEETKKKLEEAG. A disordered region spans residues 99–131; sequence ESTPKPIKEGTNKDDAEETKKKLEEAGAKVTVK.

This sequence belongs to the bacterial ribosomal protein bL12 family. In terms of assembly, homodimer. Part of the ribosomal stalk of the 50S ribosomal subunit. Forms a multimeric L10(L12)X complex, where L10 forms an elongated spine to which 2 to 4 L12 dimers bind in a sequential fashion. Binds GTP-bound translation factors.

In terms of biological role, forms part of the ribosomal stalk which helps the ribosome interact with GTP-bound translation factors. Is thus essential for accurate translation. The sequence is that of Large ribosomal subunit protein bL12 from Gloeothece citriformis (strain PCC 7424) (Cyanothece sp. (strain PCC 7424)).